The sequence spans 510 residues: ATP synthase subunit alpha (510 aa).

Residue 169 to 176 (GDRQTGKT) coordinates ATP.

Belongs to the ATPase alpha/beta chains family. As to quaternary structure, F-type ATPases have 2 components, CF(1) - the catalytic core - and CF(0) - the membrane proton channel. CF(1) has five subunits: alpha(3), beta(3), gamma(1), delta(1), epsilon(1). CF(0) has three main subunits: a(1), b(2) and c(9-12). The alpha and beta chains form an alternating ring which encloses part of the gamma chain. CF(1) is attached to CF(0) by a central stalk formed by the gamma and epsilon chains, while a peripheral stalk is formed by the delta and b chains.

The protein localises to the cell inner membrane. The catalysed reaction is ATP + H2O + 4 H(+)(in) = ADP + phosphate + 5 H(+)(out). Functionally, produces ATP from ADP in the presence of a proton gradient across the membrane. The alpha chain is a regulatory subunit. The polypeptide is ATP synthase subunit alpha (Anaeromyxobacter dehalogenans (strain 2CP-C)).